A 188-amino-acid polypeptide reads, in one-letter code: SRP-independent targeting protein 3 (188 aa).

The helical transmembrane segment at 27–47 threads the bilayer; it reads TIIMYIRILYCSSIGISWIIY. S157 bears the Phosphoserine mark. The tract at residues 157–188 is disordered; sequence SLFGGMGQTGPKTDKKSIEEAERAGNAGVKAE. A compositionally biased stretch (basic and acidic residues) spans 168–179; it reads KTDKKSIEEAER.

It belongs to the PHO88 family. Interacts with ENV10/SND2. ENV10/SND2 and PHO88/SND3 form a complex with the translocon in the endoplasmic reticulum membrane.

It localises to the endoplasmic reticulum membrane. It is found in the mitochondrion. In terms of biological role, functions in the SND pathway, a SRP (signal recognition particle) and GET (guided entry of tail-anchored proteins) independent pathway for targeting a broad range of substrate proteins to the endoplasmic reticulum. SND functions in parallel to GET in targeting proteins with downstream hydrophobic motifs. Involved in inorganic phosphate uptake. Also involved in telomere length regulation and maintenance. This chain is SRP-independent targeting protein 3, found in Saccharomyces cerevisiae (strain ATCC 204508 / S288c) (Baker's yeast).